Reading from the N-terminus, the 1549-residue chain is VPS10 homolog 1 (1549 aa).

The signal sequence occupies residues 1 to 21 (MALFRALYIIWVFLLIPLSNA). The Lumenal portion of the chain corresponds to 22 to 1369 (EEFTPKVTRT…AFREKYSINT (1348 aa)). BNR repeat units lie at residues 57 to 68 (EISFDAGENWKT), 101 to 112 (YVTDDQGKSWRP), 159 to 170 (IYTTNDGVSFSQ), 228 to 239 (ILSADGGETFKE), 393 to 404 (KVSVDNGLTWTN), and 465 to 476 (FISRDSGLTWRL). A glycan (N-linked (GlcNAc...) asparagine) is linked at asparagine 479. 2 BNR repeats span residues 511–522 (YYSLDQGKTWGE) and 740–751 (YISHDGGQTIKR). An N-linked (GlcNAc...) asparagine glycan is attached at asparagine 769. The BNR 9 repeat unit spans residues 837 to 848 (YLTKDGGETFTE). N-linked (GlcNAc...) asparagine glycosylation is present at asparagine 986. BNR repeat units lie at residues 1040–1051 (KITFNDGSDWNF), 1119–1130 (FLTTDGGETWTE), and 1160–1171 (SYSTDFGKTWKD). The chain crosses the membrane as a helical span at residues 1370–1390 (GAYALVFVTILLVIFFVAWFV). Residues 1391–1549 (YDRGIRRNGG…DLAAARSEDK (159 aa)) lie on the Cytoplasmic side of the membrane. Positions 1479–1549 (EPDGFHEDSN…DLAAARSEDK (71 aa)) are disordered. Residues 1489–1501 (DLSSFRGQGSNSE) are compositionally biased toward polar residues. Positions 1535-1549 (ASHESDLAAARSEDK) are enriched in basic and acidic residues.

The protein belongs to the VPS10-related sortilin family.

Its subcellular location is the golgi apparatus. It is found in the trans-Golgi network membrane. It localises to the endosome membrane. Functions as a sorting receptor in the Golgi compartment required for the intracellular sorting and delivery of soluble vacuolar proteins, like carboxypeptidase Y (CPY) and proteinase A. This is VPS10 homolog 1 (VTH1) from Saccharomyces cerevisiae (strain ATCC 204508 / S288c) (Baker's yeast).